The following is a 389-amino-acid chain: Rhizopuspepsin-1 (389 aa).

An N-terminal signal peptide occupies residues 1 to 21 (MKFTLISSCVALAAMTLAVEA). A propeptide spans 22 to 66 (APNGKKINIPLAKNNSYKPSAKNALNKALAKYNRRKVGSGGITTE) (activation peptide). One can recognise a Peptidase A1 domain in the interval 82–385 (YYGEVTVGTP…NQEVPEVQIA (304 aa)). D100 is an active-site residue. C113 and C116 are disulfide-bonded. D283 is an active-site residue. C317 and C350 form a disulfide bridge.

The protein belongs to the peptidase A1 family.

It carries out the reaction Hydrolysis of proteins with broad specificity similar to that of pepsin A, preferring hydrophobic residues at P1 and P1'. Clots milk and activates trypsinogen. Does not cleave 4-Gln-|-His-5, but does cleave 10-His-|-Leu-11 and 12-Val-|-Glu-13 in B chain of insulin.. This chain is Rhizopuspepsin-1 (RNAP), found in Rhizopus niveus.